The sequence spans 270 residues: ATP synthase subunit a (270 aa).

The next 5 helical transmembrane spans lie at 38–58 (VHIDSLFFSWFTGLIFLGIFY), 98–118 (IAPLALTIFCWVFLMNVMDLV), 143–163 (DVNITMAMALGVFALMIYYSI), 208–228 (LFGNMFAGEVVFILCAAMLPW), and 239–259 (AIFHILVITIQAFVFMMLTIV).

Belongs to the ATPase A chain family. F-type ATPases have 2 components, CF(1) - the catalytic core - and CF(0) - the membrane proton channel. CF(1) has five subunits: alpha(3), beta(3), gamma(1), delta(1), epsilon(1). CF(0) has three main subunits: a(1), b(2) and c(9-12). The alpha and beta chains form an alternating ring which encloses part of the gamma chain. CF(1) is attached to CF(0) by a central stalk formed by the gamma and epsilon chains, while a peripheral stalk is formed by the delta and b chains.

The protein localises to the cell inner membrane. Key component of the proton channel; it plays a direct role in the translocation of protons across the membrane. The protein is ATP synthase subunit a of Vibrio parahaemolyticus serotype O3:K6 (strain RIMD 2210633).